The chain runs to 358 residues: Heme A synthase (358 aa).

A run of 8 helical transmembrane segments spans residues 25 to 45 (LVRYWLYAVFAVLIAIVMVGG), 111 to 131 (LLARFVGFLVAVPLGFFWLTG), 141 to 161 (MLGLLALGGLQGAIGWWMVAS), 176 to 196 (IHLTTACVIITAVFYIARGLV), 210 to 230 (FAGWIVFAVLVQIYLGGLVAG), 269 to 289 (VQFVHRMFAYTVLLLAILHAV), 304 to 324 (TIVLVGLVFIQAMIGIATLLM), and 326 to 346 (APLHLGLTHQFFALVVLAFAV). Heme is bound at residue histidine 273. Histidine 334 is a binding site for heme.

It belongs to the COX15/CtaA family. Type 2 subfamily. In terms of assembly, interacts with CtaB. The cofactor is heme b.

The protein resides in the cell membrane. The enzyme catalyses Fe(II)-heme o + 2 A + H2O = Fe(II)-heme a + 2 AH2. It participates in porphyrin-containing compound metabolism; heme A biosynthesis; heme A from heme O: step 1/1. Functionally, catalyzes the conversion of heme O to heme A by two successive hydroxylations of the methyl group at C8. The first hydroxylation forms heme I, the second hydroxylation results in an unstable dihydroxymethyl group, which spontaneously dehydrates, resulting in the formyl group of heme A. The polypeptide is Heme A synthase (Brucella suis (strain ATCC 23445 / NCTC 10510)).